The following is a 351-amino-acid chain: Probable dual-specificity RNA methyltransferase RlmN (351 aa).

Glu-92 serves as the catalytic Proton acceptor. In terms of domain architecture, Radical SAM core spans 98-332 (TDQRLTVCIS…VSLRASRGLD (235 aa)). Cys-105 and Cys-337 form a disulfide bridge. [4Fe-4S] cluster-binding residues include Cys-112, Cys-116, and Cys-119. Residues 159 to 160 (GE), Ser-189, 218 to 220 (SLH), and Asn-294 each bind S-adenosyl-L-methionine. Cys-337 (S-methylcysteine intermediate) is an active-site residue.

The protein belongs to the radical SAM superfamily. RlmN family. It depends on [4Fe-4S] cluster as a cofactor.

Its subcellular location is the cytoplasm. The enzyme catalyses adenosine(2503) in 23S rRNA + 2 reduced [2Fe-2S]-[ferredoxin] + 2 S-adenosyl-L-methionine = 2-methyladenosine(2503) in 23S rRNA + 5'-deoxyadenosine + L-methionine + 2 oxidized [2Fe-2S]-[ferredoxin] + S-adenosyl-L-homocysteine. It catalyses the reaction adenosine(37) in tRNA + 2 reduced [2Fe-2S]-[ferredoxin] + 2 S-adenosyl-L-methionine = 2-methyladenosine(37) in tRNA + 5'-deoxyadenosine + L-methionine + 2 oxidized [2Fe-2S]-[ferredoxin] + S-adenosyl-L-homocysteine. Functionally, specifically methylates position 2 of adenine 2503 in 23S rRNA and position 2 of adenine 37 in tRNAs. This chain is Probable dual-specificity RNA methyltransferase RlmN, found in Synechococcus sp. (strain CC9902).